A 215-amino-acid chain; its full sequence is MASATLTAWIKMPSFLKKILKLRGRRQEDESRSRTLSDSSMLSCRVNQLTSEGTEAGSTTPSTLPKDQALLIEPKVRAKEKSQHRRPKIIDQVRRVESLGEQASQRQKHMLETLINKIYTGPLGEELVQTLYLRIWAMEETPESLKILQMREDIRDQVLKMKTERWLRTLIRGEKTKLKDFQKRYEEVHPYLMKEKVEQVIMEEAWSLAAHIVQE.

Positions M12–R34 are disordered. The segment at F15–L22 is involved in self-degradation and in host STAT1 degradation.

This sequence belongs to the respirovirus protein C family. The different isoforms interact (via C-terminus) with unphosphorylated and phosphorylated human STAT1 (via N-terminus), favoring the formation of parallel STAT1 homodimers. The different isoforms do not interact with host STAT2. C protein interacts with L protein; this interaction has an inhibitory effect on viral transcription and replication. Protein Y2 is produced not only by alternative initiation, but also by proteolytic cleavage of C'. Only alternative initiation is detected in vitro, whereas in vivo cleavage seems to be predominant.

It is found in the host cytoplasm. In terms of biological role, the different products prevent the establishment of cellular antiviral state by blocking the interferon-alpha/beta (IFN-alpha/beta) and IFN-gamma signaling pathways. They inhibit IFN-alpha/beta induced tyrosine phosphorylation of STAT1 and STAT2. Blocking the IFN-alpha/beta pathway requires binding to STAT1 in the cytoplasm. They inhibit IFN-gamma induced serine phosphorylation of STAT1. Block the IFN-gamma pathway by binding to and stabilizing the parallel form of the STAT1 dimer, further inducing high-molecular-weight complex formation and inhibition of transcription by IFN-gamma. May also have a role in preventing the cell to enter apoptosis. Modulate regulation of viral transcription and replication. Overexpression inhibits the viral RNA polymerase. The absence of all C', C and Y2 proteins leads to viral delayed growth. Plays an important role in virion particles release. Modulates virion shape. The polypeptide is Protein C' (P/V/C) (Cavia cutleri (Guinea pig)).